We begin with the raw amino-acid sequence, 436 residues long: Probable ABC transporter binding protein NosD (436 aa).

The first 27 residues, 1–27, serve as a signal peptide directing secretion; it reads MFKAQATFSRYSAAVSLLLLFSGAAQA. PbH1 repeat units follow at residues 85-113, 115-136, 137-166, 167-188, 189-210, 233-255, 293-314, and 316-354; these read APDVLVEGCTLYEWGSDLTAMDSAVFILP, AERAQISNNRMRGPGFGVFVDG, TRDVQVIGNEIDGDAGVRSQDRGNGIHLFA, VSGARVLHNHVRNARDGIYIDT, SNGNHLEGNVIEDVRYGVHYMF, SRKLTVTGNRSEQDQNYGILMNY, SLFNTIENNHFEKSSLGIHLTA, and SEDNRISGNAFVGNQQQVKYVASRTQEWSVDGRGNYWSD.

Belongs to the NosD family. As to quaternary structure, the complex may be composed of an ATP-binding protein (NosF), a transmembrane protein (NosY) and a solute-binding protein (NosD).

The protein localises to the periplasm. Its function is as follows. Required for the assembly of the copper chromophores of nitrous oxide reductase. Could be part of the ABC transporter complex NosDFY. This chain is Probable ABC transporter binding protein NosD, found in Stutzerimonas stutzeri (Pseudomonas stutzeri).